The chain runs to 405 residues: L-rhamnonate dehydratase (405 aa).

Residues His33 and Arg59 each coordinate substrate. Asp226, Glu252, and Glu280 together coordinate Mg(2+). The Proton acceptor role is filled by His329. Glu349 serves as a coordination point for substrate.

Belongs to the mandelate racemase/muconate lactonizing enzyme family. RhamD subfamily. Homooctamer; tetramer of dimers. Requires Mg(2+) as cofactor.

The enzyme catalyses L-rhamnonate = 2-dehydro-3-deoxy-L-rhamnonate + H2O. Catalyzes the dehydration of L-rhamnonate to 2-keto-3-deoxy-L-rhamnonate (KDR). The sequence is that of L-rhamnonate dehydratase from Escherichia coli (strain SMS-3-5 / SECEC).